Reading from the N-terminus, the 522-residue chain is Protein tweety homolog 3 (522 aa).

Residues 1 to 43 (MAAAISYTPPWWVNLLHRLPHLNLQWESLNGDFRPEDPDYQQS) are Extracellular-facing. The helical transmembrane segment at 44 to 64 (LMLLACVALSCLALDLLFLLF) threads the bilayer. Topologically, residues 65 to 87 (YSFWFCCRHRKTEENTNADCCCT) are cytoplasmic. The chain crosses the membrane as a helical span at residues 88–108 (VWCVIVATLVCSAGIAVGFYG). The Extracellular portion of the chain corresponds to 109-211 (NGETSDGIHR…VDLFDWYRWL (103 aa)). The Ca(2+) site is built by Glu111 and Asp114. N-linked (GlcNAc...) asparagine glycans are attached at residues Asn127 and Asn145. Residues 212–232 (GYLGLLLFHVFICLLVLFGLI) form a helical membrane-spanning segment. Topologically, residues 233–238 (RNSKGT) are cytoplasmic. Residues 239-259 (LICVCFLGMMALIISWASMGL) form a helical membrane-spanning segment. At 260-386 (ELAVAVGSSD…LTGFCYDGVE (127 aa)) the chain is on the extracellular side. Intrachain disulfides connect Cys271-Cys381 and Cys299-Cys366. Asn351 carries an N-linked (GlcNAc...) asparagine glycan. Residues 387-407 (GLIYLVLFSFVTALMFSSIVC) form a helical membrane-spanning segment. The Cytoplasmic segment spans residues 408–522 (SVPHTWQQRR…TNRPETDPVH (115 aa)). Positions 483–522 (QNPRCENTPLIGRESPPPSYTSSMRAKYLATNRPETDPVH) are disordered.

The protein belongs to the tweety family. Homotetramer; disulfide-linked. Forms cis-homodimers in the presence of Ca(2+).

It is found in the cell membrane. The enzyme catalyses chloride(in) = chloride(out). The catalysed reaction is L-glutamate(out) = L-glutamate(in). Its function is as follows. May act as a calcium-independent, swelling-dependent volume-regulated anion channel (VRAC-swell) which plays a pivotal role in the process of regulatory volume decrease (RVD) in the brain through the efflux of anions like chloride and organic osmolytes like glutamate. Probable large-conductance Ca(2+)-activated chloride channel. The protein is Protein tweety homolog 3 (ttyh3) of Xenopus laevis (African clawed frog).